The following is a 263-amino-acid chain: MASSLHKHLLSAARYHLKETKRMSMMVALNLAAEILAVDCGLKPCFLYDYTTSGVQQICSYLKELQNLGLIVGHLHILNIEETILIINVTKAVSYLETLLHSQDLHLIDVSNYLSQPELVSSNQVPQIHAQLAELLGHIKPYQSGQPASVSVGGIQSPEWNLCTMFGFFLQFPSTYWFDTQKGFENCLSFTPLRLFTVQANCSRIGHQSVQIYSFTVPECVYQATQVHLEDWSKSLKQAFNEQNYFTDLEIITNTVSLPSVAL.

It belongs to the UPF0739 family.

The polypeptide is UPF0739 protein C1orf74 homolog (Xenopus tropicalis (Western clawed frog)).